The sequence spans 91 residues: Signal recognition particle 19 kDa protein (91 aa).

This sequence belongs to the SRP19 family. Part of the signal recognition particle protein translocation system, which is composed of SRP and FtsY. Archaeal SRP consists of a 7S RNA molecule of 300 nucleotides and two protein subunits: SRP54 and SRP19.

The protein resides in the cytoplasm. Functionally, involved in targeting and insertion of nascent membrane proteins into the cytoplasmic membrane. Binds directly to 7S RNA and mediates binding of the 54 kDa subunit of the SRP. In Methanothermobacter thermautotrophicus (strain ATCC 29096 / DSM 1053 / JCM 10044 / NBRC 100330 / Delta H) (Methanobacterium thermoautotrophicum), this protein is Signal recognition particle 19 kDa protein.